We begin with the raw amino-acid sequence, 135 residues long: ATP synthase epsilon chain (135 aa).

Belongs to the ATPase epsilon chain family. As to quaternary structure, F-type ATPases have 2 components, CF(1) - the catalytic core - and CF(0) - the membrane proton channel. CF(1) has five subunits: alpha(3), beta(3), gamma(1), delta(1), epsilon(1). CF(0) has three main subunits: a, b and c.

The protein resides in the cell inner membrane. Functionally, produces ATP from ADP in the presence of a proton gradient across the membrane. The polypeptide is ATP synthase epsilon chain (Rhodopseudomonas palustris (strain ATCC BAA-98 / CGA009)).